The primary structure comprises 251 residues: Triosephosphate isomerase (251 aa).

Asn10 and Lys12 together coordinate substrate. The active-site Electrophile is His95. Catalysis depends on Glu167, which acts as the Proton acceptor.

Belongs to the triosephosphate isomerase family. In terms of assembly, homodimer.

The enzyme catalyses D-glyceraldehyde 3-phosphate = dihydroxyacetone phosphate. It functions in the pathway carbohydrate biosynthesis; gluconeogenesis. Its pathway is carbohydrate degradation; glycolysis; D-glyceraldehyde 3-phosphate from glycerone phosphate: step 1/1. The polypeptide is Triosephosphate isomerase (TPI) (Coprinopsis cinerea (strain Okayama-7 / 130 / ATCC MYA-4618 / FGSC 9003) (Inky cap fungus)).